The chain runs to 193 residues: Flagellar transcriptional regulator FlhC (193 aa).

Zn(2+) contacts are provided by cysteine 138, cysteine 141, cysteine 158, and cysteine 161.

It belongs to the FlhC family. As to quaternary structure, heterohexamer composed of two FlhC and four FlhD subunits. Each FlhC binds a FlhD dimer, forming a heterotrimer, and a hexamer assembles by dimerization of two heterotrimers. The cofactor is Zn(2+).

The protein resides in the cytoplasm. Functionally, functions in complex with FlhD as a master transcriptional regulator that regulates transcription of several flagellar and non-flagellar operons by binding to their promoter region. Activates expression of class 2 flagellar genes, including fliA, which is a flagellum-specific sigma factor that turns on the class 3 genes. Also regulates genes whose products function in a variety of physiological pathways. The protein is Flagellar transcriptional regulator FlhC of Proteus mirabilis.